Here is a 443-residue protein sequence, read N- to C-terminus: Thymidine phosphorylase (443 aa).

This sequence belongs to the thymidine/pyrimidine-nucleoside phosphorylase family. As to quaternary structure, homodimer.

It catalyses the reaction thymidine + phosphate = 2-deoxy-alpha-D-ribose 1-phosphate + thymine. The protein operates within pyrimidine metabolism; dTMP biosynthesis via salvage pathway; dTMP from thymine: step 1/2. The enzymes which catalyze the reversible phosphorolysis of pyrimidine nucleosides are involved in the degradation of these compounds and in their utilization as carbon and energy sources, or in the rescue of pyrimidine bases for nucleotide synthesis. The sequence is that of Thymidine phosphorylase from Shewanella sp. (strain MR-7).